Here is a 318-residue protein sequence, read N- to C-terminus: Coproporphyrin III ferrochelatase (318 aa).

Residues histidine 186 and glutamate 268 each contribute to the Fe(2+) site.

It belongs to the ferrochelatase family.

The protein localises to the cytoplasm. It carries out the reaction Fe-coproporphyrin III + 2 H(+) = coproporphyrin III + Fe(2+). It participates in porphyrin-containing compound metabolism; protoheme biosynthesis. Functionally, involved in coproporphyrin-dependent heme b biosynthesis. Catalyzes the insertion of ferrous iron into coproporphyrin III to form Fe-coproporphyrin III. This Lactococcus lactis subsp. cremoris (strain MG1363) protein is Coproporphyrin III ferrochelatase.